A 371-amino-acid polypeptide reads, in one-letter code: Flagellar P-ring protein (371 aa).

Residues 1-25 (MKMRACKWLLTLAVAFAATLSSAYA) form the signal peptide.

Belongs to the FlgI family. In terms of assembly, the basal body constitutes a major portion of the flagellar organelle and consists of four rings (L,P,S, and M) mounted on a central rod.

It localises to the periplasm. Its subcellular location is the bacterial flagellum basal body. Assembles around the rod to form the L-ring and probably protects the motor/basal body from shearing forces during rotation. In Sinorhizobium medicae (strain WSM419) (Ensifer medicae), this protein is Flagellar P-ring protein.